A 414-amino-acid chain; its full sequence is Serine hydroxymethyltransferase (414 aa).

(6S)-5,6,7,8-tetrahydrofolate is bound by residues leucine 121 and 125–127; that span reads GHL. The residue at position 229 (lysine 229) is an N6-(pyridoxal phosphate)lysine.

Belongs to the SHMT family. In terms of assembly, homodimer. Requires pyridoxal 5'-phosphate as cofactor.

Its subcellular location is the cytoplasm. It carries out the reaction (6R)-5,10-methylene-5,6,7,8-tetrahydrofolate + glycine + H2O = (6S)-5,6,7,8-tetrahydrofolate + L-serine. It participates in one-carbon metabolism; tetrahydrofolate interconversion. The protein operates within amino-acid biosynthesis; glycine biosynthesis; glycine from L-serine: step 1/1. Catalyzes the reversible interconversion of serine and glycine with tetrahydrofolate (THF) serving as the one-carbon carrier. This reaction serves as the major source of one-carbon groups required for the biosynthesis of purines, thymidylate, methionine, and other important biomolecules. Also exhibits THF-independent aldolase activity toward beta-hydroxyamino acids, producing glycine and aldehydes, via a retro-aldol mechanism. The protein is Serine hydroxymethyltransferase of Polaromonas sp. (strain JS666 / ATCC BAA-500).